The following is a 297-amino-acid chain: Retroviral cyclin (297 aa).

In terms of domain architecture, Cyclin N-terminal spans 21–113 (PVYWKELLNW…KPSLLLTETM (93 aa)). The interval 21-113 (PVYWKELLNW…KPSLLLTETM (93 aa)) is transcription activation domain. Positions 222–270 (QINLDFAEAEQREAAERRALLEREREQQLQEARERLDDVMAVLEAEVAI) form a coiled coil.

Belongs to the cyclin family. As to quaternary structure, interacts (via transcription activation domain) with host TAF9 in vitro. Interacts with host CDK3 and CDK8.

It is found in the host nucleus. In terms of biological role, transforming protein which induces the development of dermal sarcomas. Induces positive and negative regulation of transcription from host and viral promoters by interacting with various cellular factors involved in protein transcription regulation. This is Retroviral cyclin (orfA) from Sander vitreus (Walleye).